Here is an 84-residue protein sequence, read N- to C-terminus: U8-theraphotoxin-Hhn1c 1 (84 aa).

Positions 1 to 21 (MKVVLIVCLVWVMAMMELVSC) are cleaved as a signal peptide. 5 cysteine pairs are disulfide-bonded: cysteine 23–cysteine 35, cysteine 29–cysteine 44, cysteine 34–cysteine 67, cysteine 54–cysteine 75, and cysteine 69–cysteine 81.

Belongs to the AVIT (prokineticin) family. As to expression, expressed by the venom gland.

It is found in the secreted. The polypeptide is U8-theraphotoxin-Hhn1c 1 (Cyriopagopus hainanus (Chinese bird spider)).